Consider the following 104-residue polypeptide: Large ribosomal subunit protein uL24 (104 aa).

The segment covering 82–92 (RIGYRTDENGK) has biased composition (basic and acidic residues). Residues 82-104 (RIGYRTDENGKRVRISRRNGKDI) are disordered. Residues 93 to 104 (RVRISRRNGKDI) are compositionally biased toward basic residues.

Belongs to the universal ribosomal protein uL24 family. As to quaternary structure, part of the 50S ribosomal subunit.

Its function is as follows. One of two assembly initiator proteins, it binds directly to the 5'-end of the 23S rRNA, where it nucleates assembly of the 50S subunit. One of the proteins that surrounds the polypeptide exit tunnel on the outside of the subunit. This Nocardia farcinica (strain IFM 10152) protein is Large ribosomal subunit protein uL24.